Consider the following 513-residue polypeptide: Zinc finger protein RFP (513 aa).

The RING-type zinc finger occupies 16–57 (CPVCLQYFAEPMMLDCGHNICCACLARCWGTAETNVSCPQCR). Residues Cys-96, His-99, Cys-118, and His-124 each coordinate Zn(2+). The segment at 96 to 127 (CEKHREPLKLYCEEDQMPICVVCDRSREHRGH) adopts a B box-type zinc-finger fold. 2 coiled-coil regions span residues 132 to 172 (LEEA…AELL) and 282 to 311 (QKCLFLTESLKQFTEKMQSDMEKIQELREA). The region spanning 298-492 (MQSDMEKIQE…SAAPLIICPM (195 aa)) is the B30.2/SPRY domain.

Belongs to the TRIM/RBCC family. Homomultimerizes. Part of a complex consisting of TRIM27, USP7 and MAGEL2; directly interacts with USP7. Interacts with PML, EIF3S6, EPC1, CHD4 and EID1. Interacts with MAGED4, MAGEF1 and MAGEL2. Interacts with PTPN11. Interacts with autophagy receptor p62/SQSTM1. In terms of assembly, (Microbial infection) Interacts with M.tuberculosis PtpA, whick blocks TRIM27-promoted JNK/p38 MAPK pathway activation and cell apoptosis. As to quaternary structure, (Microbial infection) Interacts with herpes simplex virus protein ICP0. As to expression, expressed in testis namely within the seminiferous tubules.

Its subcellular location is the nucleus. The protein resides in the cytoplasm. The protein localises to the PML body. It localises to the early endosome. It is found in the mitochondrion. The enzyme catalyses S-ubiquitinyl-[E2 ubiquitin-conjugating enzyme]-L-cysteine + [acceptor protein]-L-lysine = [E2 ubiquitin-conjugating enzyme]-L-cysteine + N(6)-ubiquitinyl-[acceptor protein]-L-lysine.. It participates in protein modification; protein ubiquitination. E3 ubiquitin-protein ligase that mediates ubiquitination of various substrates and thereby plays a role in diffent processes including proliferation, innate immunity, apoptosis, immune response or autophagy. Ubiquitinates PIK3C2B and inhibits its activity by mediating the formation of 'Lys-48'-linked polyubiquitin chains; the function inhibits CD4 T-cell activation. Acts as a regulator of retrograde transport: together with MAGEL2, mediates the formation of 'Lys-63'-linked polyubiquitin chains at 'Lys-220' of WASHC1, leading to promote endosomal F-actin assembly. Has a transcriptional repressor activity by cooperating with EPC1. Induces apoptosis by activating Jun N-terminal kinase and p38 kinase and also increases caspase-3-like activity independently of mitochondrial events. May function in male germ cell development. Has DNA-binding activity and preferentially bound to double-stranded DNA. Forms a complex with and ubiquitinates the ubiquitin-specific protease USP7, which in turn deubiquitinates RIPK1 resulting in the positive regulation of TNF-alpha-induced apoptosis. In addition, acts with USP7 or PTPN11 as an inhibitor of the antiviral signaling pathway by promoting kinase TBK1 ubiquitination and degradation. Acts as a negative regulator of NOD2 signaling by mediating ubiquitination of NOD2, promoting its degradation by the proteasome. Alternatively, facilitates mitophagy via stabilization of active TBK1. Negatively regulates autophagy flux under basal conditions by directly polyubiquitinating ULK1. During starvation-induced autophagy, catalyzes non-degradative ubiquitination of the kinase STK38L promoting its activation and phosphorylation of ULK1 leading to its ubiquitination and degradation to restrain the amplitude and duration of autophagy. Its function is as follows. (Microbial infection) Positively regulates hepatitis C virus replication by suppressing type I IFN response during infection. The polypeptide is Zinc finger protein RFP (Homo sapiens (Human)).